The chain runs to 387 residues: Sharpin (387 aa).

The self-association stretch occupies residues 1–180; it reads MAPPAGGAAA…EREELAGSLA (180 aa). Residues 122-132 show a composition bias toward polar residues; it reads EGQNGSKSNSP. A disordered region spans residues 122–169; it reads EGQNGSKSNSPPALGPEACPVSLPSPPEASTLKGPPPEADLPRSPGNL. The residue at position 165 (serine 165) is a Phosphoserine. The interaction with SHANK1 stretch occupies residues 175-310; it reads LAGSLARAIA…SAPREAPATG (136 aa). The Ubiquitin-like domain occupies 219-288; the sequence is IRLQVTLEDA…PERSLASYGV (70 aa). Residues 305–349 form a disordered region; it reads EAPATGPSPQHPQKMDGELGRLFPPSLGLPPGPQPAASSLPSPLQ. Position 312 is a phosphoserine (serine 312). Residues 339–349 show a composition bias toward low complexity; it reads PAASSLPSPLQ. A RanBP2-type zinc finger spans residues 348-377; sequence LQPSWSCPSCTFINAPDRPGCEMCSTQRPC.

Monomer and homodimer. Component of the LUBAC complex (linear ubiquitin chain assembly complex) which consists of SHARPIN, RBCK1 and RNF31. LUBAC has a MW of approximately 600 kDa suggesting a heteromultimeric assembly of its subunits. Associates with the TNF-R1 signaling complex (TNF-RSC) in a stimulation-dependent manner. Interacts with EYA1, EYA2, SHANK1 and SHANK3 (via ANK repeats). Highly expressed in skeletal muscle and placenta and at lower levels in brain, heart, colon without mucosa, thymus, spleen, kidney, liver, small intestine, lung and peripheral blood leukocytes. Up-regulated in various tumor tissues such as kidney, liver, ovary and pancreas tumors.

Its subcellular location is the cytoplasm. The protein localises to the cytosol. It is found in the synapse. The protein operates within protein modification; protein ubiquitination. In terms of biological role, component of the LUBAC complex which conjugates linear polyubiquitin chains in a head-to-tail manner to substrates and plays a key role in NF-kappa-B activation and regulation of inflammation. LUBAC conjugates linear polyubiquitin to IKBKG and RIPK1 and is involved in activation of the canonical NF-kappa-B and the JNK signaling pathways. Linear ubiquitination mediated by the LUBAC complex interferes with TNF-induced cell death and thereby prevents inflammation. LUBAC is recruited to the TNF-R1 signaling complex (TNF-RSC) following polyubiquitination of TNF-RSC components by BIRC2 and/or BIRC3 and to conjugate linear polyubiquitin to IKBKG and possibly other components contributing to the stability of the complex. The LUBAC complex is also involved in innate immunity by conjugating linear polyubiquitin chains at the surface of bacteria invading the cytosol to form the ubiquitin coat surrounding bacteria. LUBAC is not able to initiate formation of the bacterial ubiquitin coat, and can only promote formation of linear polyubiquitins on pre-existing ubiquitin. The bacterial ubiquitin coat acts as an 'eat-me' signal for xenophagy and promotes NF-kappa-B activation. Together with OTULIN, the LUBAC complex regulates the canonical Wnt signaling during angiogenesis. This chain is Sharpin, found in Homo sapiens (Human).